The sequence spans 144 residues: 3-dehydroquinate dehydratase (144 aa).

Tyr22 serves as the catalytic Proton acceptor. Substrate-binding residues include Asn71, His77, and Asp84. His97 serves as the catalytic Proton donor. Substrate contacts are provided by residues 98-99 (IS) and Arg108.

This sequence belongs to the type-II 3-dehydroquinase family. In terms of assembly, homododecamer.

It carries out the reaction 3-dehydroquinate = 3-dehydroshikimate + H2O. The protein operates within metabolic intermediate biosynthesis; chorismate biosynthesis; chorismate from D-erythrose 4-phosphate and phosphoenolpyruvate: step 3/7. Catalyzes a trans-dehydration via an enolate intermediate. The polypeptide is 3-dehydroquinate dehydratase (Thermotoga petrophila (strain ATCC BAA-488 / DSM 13995 / JCM 10881 / RKU-1)).